The sequence spans 636 residues: Probable potassium transport system protein Kup (636 aa).

12 helical membrane passes run 22–42, 64–84, 114–134, 150–170, 182–202, 220–240, 261–281, 293–313, 351–371, 383–403, 408–428, and 433–453; these read MGLLVAAVGVVYGDIGTSPLY, ILSLILWSLLWVVSFKYVMFI, ALMVGCGLVGASLFYGDSMIT, FEGIDHWVVPISLVVLVALFL, LFGPIMVTWFVVLGALGVHGI, FFIVHPGMGVAILGAVVLALT, WFALVLPALVLNYFGQGAILL, LLAPGWALLPLVGLATMATVI, IYIGAVNWTLMVGVVLLVIGF, VAVTGTMLMTTILVSAVMLLL, PVLAVPLLVGFLLVDGLFFAA, and IVQGGAFPVLAGIVLFVLMST.

It belongs to the HAK/KUP transporter (TC 2.A.72) family.

Its subcellular location is the cell inner membrane. The catalysed reaction is K(+)(in) + H(+)(in) = K(+)(out) + H(+)(out). Functionally, transport of potassium into the cell. Likely operates as a K(+):H(+) symporter. The chain is Probable potassium transport system protein Kup from Pseudomonas entomophila (strain L48).